The sequence spans 347 residues: Ribosomal RNA small subunit methyltransferase C (347 aa).

Belongs to the methyltransferase superfamily. RsmC family. Monomer.

The protein resides in the cytoplasm. It catalyses the reaction guanosine(1207) in 16S rRNA + S-adenosyl-L-methionine = N(2)-methylguanosine(1207) in 16S rRNA + S-adenosyl-L-homocysteine + H(+). Specifically methylates the guanine in position 1207 of 16S rRNA in the 30S particle. This is Ribosomal RNA small subunit methyltransferase C from Shewanella baltica (strain OS185).